Reading from the N-terminus, the 383-residue chain is Erythronate-4-phosphate dehydrogenase (383 aa).

Residues S45 and T67 each contribute to the substrate site. D147 serves as a coordination point for NAD(+). R208 is an active-site residue. D232 is a binding site for NAD(+). E237 is a catalytic residue. H254 functions as the Proton donor in the catalytic mechanism. G257 is a binding site for NAD(+). Y258 serves as a coordination point for substrate.

This sequence belongs to the D-isomer specific 2-hydroxyacid dehydrogenase family. PdxB subfamily. In terms of assembly, homodimer.

The protein resides in the cytoplasm. It carries out the reaction 4-phospho-D-erythronate + NAD(+) = (R)-3-hydroxy-2-oxo-4-phosphooxybutanoate + NADH + H(+). It functions in the pathway cofactor biosynthesis; pyridoxine 5'-phosphate biosynthesis; pyridoxine 5'-phosphate from D-erythrose 4-phosphate: step 2/5. Functionally, catalyzes the oxidation of erythronate-4-phosphate to 3-hydroxy-2-oxo-4-phosphonooxybutanoate. The protein is Erythronate-4-phosphate dehydrogenase of Psychromonas ingrahamii (strain DSM 17664 / CCUG 51855 / 37).